The following is a 570-amino-acid chain: Putative diflavin flavoprotein A 5 (570 aa).

The zinc metallo-hydrolase stretch occupies residues 38-231 (ERGTTSNSYV…LQVRLYAVGH (194 aa)). The Flavodoxin-like domain occupies 260–402 (VALLYASAYG…VGTDFAQTLK (143 aa)). Residues 421 to 570 (VGRIVGSVCV…INHRKTGNHY (150 aa)) form a flavodoxin-reductase-like region.

This sequence in the N-terminal section; belongs to the zinc metallo-hydrolase group 3 family. It in the C-terminal section; belongs to the flavodoxin reductase family. Fe cation serves as cofactor.

Its function is as follows. Mediates electron transfer from NADH to oxygen, reducing it to water. This modular protein has 3 redox cofactors, in other organisms the same activity requires 2 or 3 proteins. The chain is Putative diflavin flavoprotein A 5 (dfa5) from Nostoc sp. (strain PCC 7120 / SAG 25.82 / UTEX 2576).